The primary structure comprises 33 residues: Phospholipase A2 homolog BmarPLA2 (33 aa).

The protein belongs to the phospholipase A2 family. Group II subfamily. K49 sub-subfamily. In terms of assembly, homodimer; non-covalently linked. In terms of tissue distribution, expressed by the venom gland.

It is found in the secreted. In terms of biological role, snake phospholipase A2 homolog that lacks enzymatic activity. May display myotoxin activity. In isolated heart decreases cardiac frequency. Also decreases mean arterial pressure. Does not show antimicrobial activity. Does not change renal parameters (such as perfusion pressure, renal vascular resistance, urinary flow, glomerular filtration rate and sodium tubular transport). The polypeptide is Phospholipase A2 homolog BmarPLA2 (Bothrops marajoensis (Marajo lancehead)).